The primary structure comprises 112 residues: U-scoloptoxin(16)-Er5a (112 aa).

An N-terminal signal peptide occupies residues 1–26; that stretch reads MNTVSVVQFLAVGCAVFVLYGRGVFA.

The protein belongs to the scoloptoxin-16 family. In terms of processing, contains 2 disulfide bonds. In terms of tissue distribution, expressed by the venom gland.

The protein localises to the secreted. The sequence is that of U-scoloptoxin(16)-Er5a from Ethmostigmus rubripes (Giant centipede).